Reading from the N-terminus, the 283-residue chain is Phosphate import ATP-binding protein PstB (283 aa).

Residues 1–20 are compositionally biased toward polar residues; the sequence is MAQTLAQTKQISQSHTFDVS. The disordered stretch occupies residues 1–32; the sequence is MAQTLAQTKQISQSHTFDVSQSHHKTPDDTNS. One can recognise an ABC transporter domain in the interval 37-278; that stretch reads YSTQNLDLWY…PSNKKTEDYI (242 aa). 69–76 contacts ATP; it reads GPSGCGKS.

It belongs to the ABC transporter superfamily. Phosphate importer (TC 3.A.1.7) family. As to quaternary structure, the complex is composed of two ATP-binding proteins (PstB), two transmembrane proteins (PstC and PstA) and a solute-binding protein (PstS).

Its subcellular location is the cell membrane. The catalysed reaction is phosphate(out) + ATP + H2O = ADP + 2 phosphate(in) + H(+). Its function is as follows. Part of the ABC transporter complex PstSACB involved in phosphate import. Responsible for energy coupling to the transport system. In Staphylococcus aureus (strain MRSA252), this protein is Phosphate import ATP-binding protein PstB.